The primary structure comprises 467 residues: Na(+)/H(+) exchange regulatory cofactor-like protein nrfl-1 (467 aa).

PDZ domains are found at residues R12–E94 and L143–D225. Residues M344–D429 are disordered. Positions P407–G425 are enriched in polar residues.

In terms of assembly, interacts (via PDZ 2 domain) with aat-6 (via PDZ-binding motif); the interaction sequesters aat-6 to the apical cell membrane of intestinal cells. Phosphorylated. As to expression, expressed in the excretory canal and intestine. Expressed on the apical cell membrane of intestinal cells (at protein level).

Its subcellular location is the cell projection. It is found in the microvillus membrane. The protein resides in the apical cell membrane. Its function is as follows. Scaffold protein that connects plasma membrane proteins with members of the ezrin/moesin/radixin family and thereby helps to link them to the actin cytoskeleton and to regulate their surface expression. Anchors the amino acid transporter protein aat-6 to the apical cell membrane of intestinal cells, particularly in older animals, in order to maintain amino acid homeostasis. May play a role in promoting fertility. The sequence is that of Na(+)/H(+) exchange regulatory cofactor-like protein nrfl-1 from Caenorhabditis elegans.